The sequence spans 346 residues: Ribosomal RNA small subunit methyltransferase H (346 aa).

Residues 47–49, Asp65, Phe92, Asp113, and Gln120 contribute to the S-adenosyl-L-methionine site; that span reads GGY. The span at 270-279 shows a compositional bias: basic and acidic residues; it reads RGEAPSRRLP. A disordered region spans residues 270–346; that stretch reads RGEAPSRRLP…ALPQRAAKGR (77 aa).

It belongs to the methyltransferase superfamily. RsmH family.

It is found in the cytoplasm. It carries out the reaction cytidine(1402) in 16S rRNA + S-adenosyl-L-methionine = N(4)-methylcytidine(1402) in 16S rRNA + S-adenosyl-L-homocysteine + H(+). Its function is as follows. Specifically methylates the N4 position of cytidine in position 1402 (C1402) of 16S rRNA. This chain is Ribosomal RNA small subunit methyltransferase H, found in Methylocella silvestris (strain DSM 15510 / CIP 108128 / LMG 27833 / NCIMB 13906 / BL2).